The sequence spans 159 residues: Urease subunit beta 2 (159 aa).

The segment at methionine 1–arginine 24 is disordered.

It belongs to the urease beta subunit family. Heterotrimer of UreA (gamma), UreB (beta) and UreC (alpha) subunits. Three heterotrimers associate to form the active enzyme.

Its subcellular location is the cytoplasm. It catalyses the reaction urea + 2 H2O + H(+) = hydrogencarbonate + 2 NH4(+). Its pathway is nitrogen metabolism; urea degradation; CO(2) and NH(3) from urea (urease route): step 1/1. Its function is as follows. Disrupting the ure2 operon has no effect on urease activity, or pathogen survival in BALB/c mice when inoculated by gavage, but confers slightly enhanced resistance to low pH killing in vitro. The chain is Urease subunit beta 2 from Brucella suis biovar 1 (strain 1330).